The following is a 349-amino-acid chain: Threonine-rich protein (349 aa).

A signal peptide spans 1–19 (MKGLTLACIAATVVAASHA). Residue asparagine 257 is glycosylated (N-linked (GlcNAc...) asparagine). The tract at residues 300-326 (QPDVSPMSVRKRRQAESAEEDDDLVGD) is disordered. Residues 316 to 326 (SAEEDDDLVGD) are compositionally biased toward acidic residues. A coiled-coil region spans residues 316 to 349 (SAEEDDDLVGDMEDLKELEQEIQEALEEVEKLDV).

Component of the acid-insoluble and acid-soluble organic matrix of calcified layers of the shell (at protein level).

It is found in the secreted. The chain is Threonine-rich protein from Lottia gigantea (Giant owl limpet).